The sequence spans 864 residues: DNA mismatch repair protein MutS (864 aa).

607 to 614 (GPNMGGKS) is an ATP binding site.

Belongs to the DNA mismatch repair MutS family.

This protein is involved in the repair of mismatches in DNA. It is possible that it carries out the mismatch recognition step. This protein has a weak ATPase activity. This chain is DNA mismatch repair protein MutS, found in Neisseria gonorrhoeae (strain ATCC 700825 / FA 1090).